The sequence spans 316 residues: Porphobilinogen deaminase (316 aa).

S-(dipyrrolylmethanemethyl)cysteine is present on cysteine 249.

Belongs to the HMBS family. As to quaternary structure, monomer. Dipyrromethane is required as a cofactor.

It carries out the reaction 4 porphobilinogen + H2O = hydroxymethylbilane + 4 NH4(+). The protein operates within porphyrin-containing compound metabolism; protoporphyrin-IX biosynthesis; coproporphyrinogen-III from 5-aminolevulinate: step 2/4. In terms of biological role, tetrapolymerization of the monopyrrole PBG into the hydroxymethylbilane pre-uroporphyrinogen in several discrete steps. This Nitrobacter winogradskyi (strain ATCC 25391 / DSM 10237 / CIP 104748 / NCIMB 11846 / Nb-255) protein is Porphobilinogen deaminase.